Reading from the N-terminus, the 195-residue chain is ATP-dependent Clp protease proteolytic subunit 2 (195 aa).

S98 (nucleophile) is an active-site residue. The active site involves H123.

Belongs to the peptidase S14 family. In terms of assembly, fourteen ClpP subunits assemble into 2 heptameric rings which stack back to back to give a disk-like structure with a central cavity, resembling the structure of eukaryotic proteasomes.

The protein resides in the cytoplasm. It carries out the reaction Hydrolysis of proteins to small peptides in the presence of ATP and magnesium. alpha-casein is the usual test substrate. In the absence of ATP, only oligopeptides shorter than five residues are hydrolyzed (such as succinyl-Leu-Tyr-|-NHMec, and Leu-Tyr-Leu-|-Tyr-Trp, in which cleavage of the -Tyr-|-Leu- and -Tyr-|-Trp bonds also occurs).. Cleaves peptides in various proteins in a process that requires ATP hydrolysis. Has a chymotrypsin-like activity. Plays a major role in the degradation of misfolded proteins. The polypeptide is ATP-dependent Clp protease proteolytic subunit 2 (Rhodopirellula baltica (strain DSM 10527 / NCIMB 13988 / SH1)).